Here is a 309-residue protein sequence, read N- to C-terminus: Ribokinase (309 aa).

Residues 14–16 (NAD), 42–46 (GKGAN), and Glu143 each bind substrate. Residues Asn187 and 223–228 (TLGSRG) contribute to the ATP site. K(+)-binding residues include Asp249 and Ile251. ATP-binding positions include 254-255 (GD) and His279. A substrate-binding site is contributed by Asp255. The active-site Proton acceptor is Asp255. K(+)-binding residues include Ala285, Arg288, Gly290, and Ser294.

It belongs to the carbohydrate kinase PfkB family. Ribokinase subfamily. In terms of assembly, homodimer. Mg(2+) serves as cofactor.

The protein localises to the cytoplasm. It carries out the reaction D-ribose + ATP = D-ribose 5-phosphate + ADP + H(+). It functions in the pathway carbohydrate metabolism; D-ribose degradation; D-ribose 5-phosphate from beta-D-ribopyranose: step 2/2. Activated by a monovalent cation that binds near, but not in, the active site. The most likely occupant of the site in vivo is potassium. Ion binding induces a conformational change that may alter substrate affinity. Functionally, catalyzes the phosphorylation of ribose at O-5 in a reaction requiring ATP and magnesium. The resulting D-ribose-5-phosphate can then be used either for sythesis of nucleotides, histidine, and tryptophan, or as a component of the pentose phosphate pathway. In Escherichia coli O157:H7, this protein is Ribokinase.